The following is a 150-amino-acid chain: Non-specific lipid transfer protein GPI-anchored 7 (150 aa).

Residues 1 to 25 (MTKTMMIFAAAMTVMALLLVPTIEA) form the signal peptide. Disulfide bonds link C29–C66, C36–C50, C51–C92, and C64–C101. Residues N41, N79, and N93 are each glycosylated (N-linked (GlcNAc...) asparagine). The disordered stretch occupies residues 103–125 (AKGAPSPKASLPPPAPAGNTKKD). D125 carries GPI-anchor amidated aspartate lipidation. The propeptide at 126-150 (AGAGNKLAGYGVTTVILSLISSIFF) is removed in mature form.

This sequence belongs to the plant LTP family. As to expression, up-regulated in the epidermis of stems.

The protein localises to the cell membrane. Probable lipid transfer protein. The protein is Non-specific lipid transfer protein GPI-anchored 7 of Arabidopsis thaliana (Mouse-ear cress).